The primary structure comprises 641 residues: FACT complex subunit SSRP1-A (641 aa).

Residues T459–T561 form a disordered region. The span at G476–F487 shows a compositional bias: acidic residues. Positions G512 to S524 are enriched in basic and acidic residues. Residues P556–R624 constitute a DNA-binding region (HMG box).

The protein belongs to the SSRP1 family. In terms of assembly, component of the FACT complex, a stable heterodimer of SPT16 and SSRP1.

The protein resides in the nucleus. It localises to the chromosome. Functionally, component of the FACT complex, a general chromatin factor that acts to reorganize nucleosomes. The FACT complex is involved in multiple processes that require DNA as a template such as mRNA elongation, DNA replication and DNA repair. During transcription elongation the FACT complex acts as a histone chaperone that both destabilizes and restores nucleosomal structure. It facilitates the passage of RNA polymerase II and transcription by promoting the dissociation of one histone H2A-H2B dimer from the nucleosome, then subsequently promotes the reestablishment of the nucleosome following the passage of RNA polymerase II. Binds specifically to double-stranded DNA. This chain is FACT complex subunit SSRP1-A (SSRP1-A), found in Oryza sativa subsp. japonica (Rice).